The chain runs to 299 residues: Protein LacX, plasmid (299 aa).

This chain is Protein LacX, plasmid (lacX), found in Lactococcus lactis subsp. lactis (Streptococcus lactis).